Consider the following 260-residue polypeptide: Adenosine 5'-phosphosulfate reductase (260 aa).

4 residues coordinate [4Fe-4S] cluster: Cys-130, Cys-131, Cys-213, and Cys-216. Cys-241 (nucleophile; cysteine thiosulfonate intermediate) is an active-site residue.

The protein belongs to the PAPS reductase family. CysH subfamily. Requires [4Fe-4S] cluster as cofactor.

The protein localises to the cytoplasm. It catalyses the reaction [thioredoxin]-disulfide + sulfite + AMP + 2 H(+) = adenosine 5'-phosphosulfate + [thioredoxin]-dithiol. It participates in sulfur metabolism; hydrogen sulfide biosynthesis; sulfite from sulfate. Catalyzes the formation of sulfite from adenosine 5'-phosphosulfate (APS) using thioredoxin as an electron donor. This is Adenosine 5'-phosphosulfate reductase from Agrobacterium fabrum (strain C58 / ATCC 33970) (Agrobacterium tumefaciens (strain C58)).